The primary structure comprises 173 residues: Peptide methionine sulfoxide reductase MsrA (173 aa).

C10 is an active-site residue.

This sequence belongs to the MsrA Met sulfoxide reductase family.

The enzyme catalyses L-methionyl-[protein] + [thioredoxin]-disulfide + H2O = L-methionyl-(S)-S-oxide-[protein] + [thioredoxin]-dithiol. It carries out the reaction [thioredoxin]-disulfide + L-methionine + H2O = L-methionine (S)-S-oxide + [thioredoxin]-dithiol. Functionally, has an important function as a repair enzyme for proteins that have been inactivated by oxidation. Catalyzes the reversible oxidation-reduction of methionine sulfoxide in proteins to methionine. The polypeptide is Peptide methionine sulfoxide reductase MsrA (Acinetobacter baumannii (strain AB307-0294)).